Consider the following 520-residue polypeptide: Maturase K (520 aa).

The protein belongs to the intron maturase 2 family. MatK subfamily.

It localises to the plastid. The protein localises to the chloroplast. Its function is as follows. Usually encoded in the trnK tRNA gene intron. Probably assists in splicing its own and other chloroplast group II introns. The protein is Maturase K of Aspidistra elatior (Cast-iron plant).